The sequence spans 131 residues: Small ribosomal subunit protein uS11 (131 aa).

The protein belongs to the universal ribosomal protein uS11 family. In terms of assembly, part of the 30S ribosomal subunit. Interacts with proteins S7 and S18. Binds to IF-3.

Functionally, located on the platform of the 30S subunit, it bridges several disparate RNA helices of the 16S rRNA. Forms part of the Shine-Dalgarno cleft in the 70S ribosome. The polypeptide is Small ribosomal subunit protein uS11 (Trichormus variabilis (strain ATCC 29413 / PCC 7937) (Anabaena variabilis)).